A 177-amino-acid polypeptide reads, in one-letter code: ATP synthase subunit delta (177 aa).

It belongs to the ATPase delta chain family. In terms of assembly, F-type ATPases have 2 components, F(1) - the catalytic core - and F(0) - the membrane proton channel. F(1) has five subunits: alpha(3), beta(3), gamma(1), delta(1), epsilon(1). F(0) has three main subunits: a(1), b(2) and c(10-14). The alpha and beta chains form an alternating ring which encloses part of the gamma chain. F(1) is attached to F(0) by a central stalk formed by the gamma and epsilon chains, while a peripheral stalk is formed by the delta and b chains.

The protein localises to the cell inner membrane. F(1)F(0) ATP synthase produces ATP from ADP in the presence of a proton or sodium gradient. F-type ATPases consist of two structural domains, F(1) containing the extramembraneous catalytic core and F(0) containing the membrane proton channel, linked together by a central stalk and a peripheral stalk. During catalysis, ATP synthesis in the catalytic domain of F(1) is coupled via a rotary mechanism of the central stalk subunits to proton translocation. In terms of biological role, this protein is part of the stalk that links CF(0) to CF(1). It either transmits conformational changes from CF(0) to CF(1) or is implicated in proton conduction. The protein is ATP synthase subunit delta of Leptothrix cholodnii (strain ATCC 51168 / LMG 8142 / SP-6) (Leptothrix discophora (strain SP-6)).